The following is a 299-amino-acid chain: MVPMTTLAPLGSGSDPDSFLRLGIPSKGRLSELATGLLNQAGLSFRRQNRGLFARVSGLPIDLIFLRTDDIPTLCAEGAIDMGITGSDLIEEAGANVEQRMAFGVGRCRLAFCVPDDEDYTDAAQLNGKRIATSFPHVTEQYLATKNAKAHLVSLSGSVEAMIRLGVADAIVDLVETGSTLAANRLRILEEIGHYETVLIQNGTHRCKEVADRLVSRLEGVVLARDYSLVEYNIPRSRVSEAEKITPGFNSPTINSLEDKDWCAVQVMVRRGEVVEVMERLKEIGASGIFEMTINNCRL.

This sequence belongs to the ATP phosphoribosyltransferase family. Long subfamily. Requires Mg(2+) as cofactor.

The protein resides in the cytoplasm. It catalyses the reaction 1-(5-phospho-beta-D-ribosyl)-ATP + diphosphate = 5-phospho-alpha-D-ribose 1-diphosphate + ATP. It functions in the pathway amino-acid biosynthesis; L-histidine biosynthesis; L-histidine from 5-phospho-alpha-D-ribose 1-diphosphate: step 1/9. Its activity is regulated as follows. Feedback inhibited by histidine. Functionally, catalyzes the condensation of ATP and 5-phosphoribose 1-diphosphate to form N'-(5'-phosphoribosyl)-ATP (PR-ATP). Has a crucial role in the pathway because the rate of histidine biosynthesis seems to be controlled primarily by regulation of HisG enzymatic activity. The protein is ATP phosphoribosyltransferase of Rhodopirellula baltica (strain DSM 10527 / NCIMB 13988 / SH1).